The sequence spans 815 residues: MDIGLRIFVVFVLLVAVTAEVYIVTMEGDPIISYKGGENGFEATAVESDEKIDTSSELVTVYARHLERKHDMILGMLFEEGSYKKLYSYKHLINGFAAHVSPEQAETLRRAPGVRSVDKDWKVRRLTTHTPEFLGLPTDVWPTGGGFDRAGEDIVIGFVDSGIYPHHPSFASHHRLPYGPLPHYKGKCEEDPHTKKSFCNRKIVGAQHFAEAAKAAGAFNPDIDYASPMDGDGHGSHTAAIAAGNNGIPLRMHGYEFGKASGMAPRARIAVYKALYRLFGGFVADVVAAIDQAVHDGVDILSLSVGPNSPPTTTKTTFLNPFDATLLGAVKAGVFVAQAAGNGGPFPKTLVSYSPWITTVAAAIDDRRYKNHLTLGNGKMLAGMGLSPPTRPHRLYTLVSANDVLLDSSVSKYNPSDCQRPEVFNKKLVEGNILLCGYSFNFVVGTASIKKVVATAKHLGAAGFVLVVENVSPGTKFDPVPSAIPGILITDVSKSMDLIDYYNASTSRDWTGRVKSFKAEGSIGDGLAPVLHKSAPQVALFSARGPNTKDFSFQDADLLKPDILAPGYLIWAAWCPNGTDEPNYVGEGFALISGTSMAAPHIAGIAALVKQKHPQWSPAAIKSALMTTSTVIDRAGRLLQAQQYSDTEAVTLVKATPFDYGSGHVNPSAALDPGLIFDAGYEDYLGFLCTTPGISAHEIRNYTNTACNYDMKHPSNFNAPSIAVSHLVGTQTVTRKVTNVAEVEETYTITARMQPSIAIEVNPPAMTLRPGATRTFSVTMTVRSVSGVYSFGEVKLKGSRGHKVRIPVVALGHRR.

The N-terminal stretch at methionine 1–alanine 19 is a signal peptide. The Inhibitor I9 domain occupies valine 21 to arginine 124. The Peptidase S8 domain maps to aspartate 120–leucine 671. Catalysis depends on charge relay system residues aspartate 160 and histidine 234. A PA domain is found at threonine 397–tyrosine 501. Asparagine 503 and asparagine 577 each carry an N-linked (GlcNAc...) asparagine glycan. The active-site Charge relay system is serine 596. An N-linked (GlcNAc...) asparagine glycan is attached at asparagine 701.

It belongs to the peptidase S8 family. Expressed in roots, leaves and flowers of mature plants.

The polypeptide is Subtilisin-like protease SBT2.5 (Arabidopsis thaliana (Mouse-ear cress)).